Consider the following 277-residue polypeptide: NH(3)-dependent NAD(+) synthetase (277 aa).

36–43 (GLSGGIDS) serves as a coordination point for ATP. Residue Asp-42 participates in Mg(2+) binding. Arg-118 contacts deamido-NAD(+). Residue Thr-138 coordinates ATP. Glu-143 is a Mg(2+) binding site. Positions 167 and 189 each coordinate ATP.

It belongs to the NAD synthetase family. As to quaternary structure, homodimer.

The catalysed reaction is deamido-NAD(+) + NH4(+) + ATP = AMP + diphosphate + NAD(+) + H(+). The protein operates within cofactor biosynthesis; NAD(+) biosynthesis; NAD(+) from deamido-NAD(+) (ammonia route): step 1/1. Catalyzes the ATP-dependent amidation of deamido-NAD to form NAD. Uses ammonia as a nitrogen source. In Chlorobium phaeovibrioides (strain DSM 265 / 1930) (Prosthecochloris vibrioformis (strain DSM 265)), this protein is NH(3)-dependent NAD(+) synthetase.